Consider the following 340-residue polypeptide: Ketol-acid reductoisomerase (NADP(+)) (340 aa).

Residues 1-182 (MRVYYDRDCD…GGGRSGIIET (182 aa)) form the KARI N-terminal Rossmann domain. Residues 24–27 (YGSQ), arginine 48, serine 51, serine 53, and 83–86 (DELQ) contribute to the NADP(+) site. Histidine 108 is a catalytic residue. NADP(+) is bound at residue glycine 134. The region spanning 183–329 (NFREECETDL…ETLRGMMPWI (147 aa)) is the KARI C-terminal knotted domain. Positions 191, 195, 227, and 231 each coordinate Mg(2+). Position 252 (serine 252) interacts with substrate.

It belongs to the ketol-acid reductoisomerase family. It depends on Mg(2+) as a cofactor.

It catalyses the reaction (2R)-2,3-dihydroxy-3-methylbutanoate + NADP(+) = (2S)-2-acetolactate + NADPH + H(+). The catalysed reaction is (2R,3R)-2,3-dihydroxy-3-methylpentanoate + NADP(+) = (S)-2-ethyl-2-hydroxy-3-oxobutanoate + NADPH + H(+). It participates in amino-acid biosynthesis; L-isoleucine biosynthesis; L-isoleucine from 2-oxobutanoate: step 2/4. Its pathway is amino-acid biosynthesis; L-valine biosynthesis; L-valine from pyruvate: step 2/4. Involved in the biosynthesis of branched-chain amino acids (BCAA). Catalyzes an alkyl-migration followed by a ketol-acid reduction of (S)-2-acetolactate (S2AL) to yield (R)-2,3-dihydroxy-isovalerate. In the isomerase reaction, S2AL is rearranged via a Mg-dependent methyl migration to produce 3-hydroxy-3-methyl-2-ketobutyrate (HMKB). In the reductase reaction, this 2-ketoacid undergoes a metal-dependent reduction by NADPH to yield (R)-2,3-dihydroxy-isovalerate. This Roseobacter denitrificans (strain ATCC 33942 / OCh 114) (Erythrobacter sp. (strain OCh 114)) protein is Ketol-acid reductoisomerase (NADP(+)).